The chain runs to 87 residues: Small ribosomal subunit protein uS15c (87 aa).

A disordered region spans residues 1–20 (MNQNLSIRKRNKLKQDSGSP).

It belongs to the universal ribosomal protein uS15 family. In terms of assembly, part of the 30S ribosomal subunit.

The protein resides in the plastid. It is found in the chloroplast. This is Small ribosomal subunit protein uS15c (rps15) from Zygnema circumcarinatum (Green alga).